We begin with the raw amino-acid sequence, 76 residues long: Transcription modulator YdgT (76 aa).

This sequence belongs to the Hha/YmoA/Cnu family.

Functionally, binds to H-NS and modifies the range of genes it silences; H-NS alone silences 'core' genes while the H-NS-Hha complex (and presumably also H-NS-YdgT) silences genes acquired by horizontal gene transfer. Plays a role silencing virulence factors in the absence of factors that induce pathogenicity. The protein is Transcription modulator YdgT (ydgT) of Salmonella typhimurium (strain SL1344).